Reading from the N-terminus, the 403-residue chain is Na(+)-translocating NADH-quinone reductase subunit B (403 aa).

The next 4 membrane-spanning stretches (helical) occupy residues Met-56–Gly-76, Ala-121–Phe-141, Leu-164–Gly-184, and Phe-195–Ala-212. An FMN phosphoryl threonine modification is found at Thr-230. 6 consecutive transmembrane segments (helical) span residues Ala-237–Ile-257, Thr-265–Trp-285, Ile-287–Ser-307, Met-312–Phe-332, Trp-348–Phe-368, and Gly-371–Val-391.

It belongs to the NqrB/RnfD family. As to quaternary structure, composed of six subunits; NqrA, NqrB, NqrC, NqrD, NqrE and NqrF. The cofactor is FMN.

Its subcellular location is the cell inner membrane. The catalysed reaction is a ubiquinone + n Na(+)(in) + NADH + H(+) = a ubiquinol + n Na(+)(out) + NAD(+). NQR complex catalyzes the reduction of ubiquinone-1 to ubiquinol by two successive reactions, coupled with the transport of Na(+) ions from the cytoplasm to the periplasm. NqrA to NqrE are probably involved in the second step, the conversion of ubisemiquinone to ubiquinol. This is Na(+)-translocating NADH-quinone reductase subunit B from Azotobacter vinelandii (strain DJ / ATCC BAA-1303).